The following is a 176-amino-acid chain: Nucleoside triphosphate/diphosphate phosphatase (176 aa).

Arg23 serves as the catalytic Proton donor. The Mg(2+) site is built by Asn87, Asp103, Asp105, Asp107, Asp120, and Glu123.

The protein belongs to the Ntdp family. The cofactor is Mg(2+).

The enzyme catalyses a ribonucleoside 5'-triphosphate + H2O = a ribonucleoside 5'-diphosphate + phosphate + H(+). The catalysed reaction is a ribonucleoside 5'-diphosphate + H2O = a ribonucleoside 5'-phosphate + phosphate + H(+). In terms of biological role, has nucleoside phosphatase activity towards nucleoside triphosphates and nucleoside diphosphates. This Bacillus cereus (strain AH820) protein is Nucleoside triphosphate/diphosphate phosphatase.